A 140-amino-acid chain; its full sequence is Lymphocyte antigen 6 complex locus protein G5c (140 aa).

The first 41 residues, 1–41, serve as a signal peptide directing secretion; it reads MRFMAGPAGSQNPGPMCFHSSLQALYTVLLIVLVMMSLVFG. Residues 60–140 form the UPAR/Ly6 domain; it reads LRCYRCLLET…SQCCFLGFLQ (81 aa). Disulfide bonds link C62–C89, C65–C74, C81–C107, and C116–C133. A glycan (N-linked (GlcNAc...) asparagine) is linked at N96.

As to quaternary structure, forms oligomers. Post-translationally, N-glycosylated.

The protein resides in the secreted. Functionally, may have a role in hematopoietic cell differentiation. This is Lymphocyte antigen 6 complex locus protein G5c (LY6G5C) from Macaca mulatta (Rhesus macaque).